The following is a 303-amino-acid chain: Probable 5-dehydro-4-deoxyglucarate dehydratase (303 aa).

Belongs to the DapA family.

It carries out the reaction 5-dehydro-4-deoxy-D-glucarate + H(+) = 2,5-dioxopentanoate + CO2 + H2O. It functions in the pathway carbohydrate acid metabolism; D-glucarate degradation; 2,5-dioxopentanoate from D-glucarate: step 2/2. The sequence is that of Probable 5-dehydro-4-deoxyglucarate dehydratase from Pseudomonas putida (strain W619).